Reading from the N-terminus, the 94-residue chain is Co-chaperonin GroES (94 aa).

Belongs to the GroES chaperonin family. Heptamer of 7 subunits arranged in a ring. Interacts with the chaperonin GroEL.

The protein resides in the cytoplasm. Functionally, together with the chaperonin GroEL, plays an essential role in assisting protein folding. The GroEL-GroES system forms a nano-cage that allows encapsulation of the non-native substrate proteins and provides a physical environment optimized to promote and accelerate protein folding. GroES binds to the apical surface of the GroEL ring, thereby capping the opening of the GroEL channel. The protein is Co-chaperonin GroES of Halalkalibacterium halodurans (strain ATCC BAA-125 / DSM 18197 / FERM 7344 / JCM 9153 / C-125) (Bacillus halodurans).